A 345-amino-acid polypeptide reads, in one-letter code: Protein RecA (345 aa).

67–74 (GPESSGKT) lines the ATP pocket.

This sequence belongs to the RecA family.

The protein localises to the cytoplasm. Functionally, can catalyze the hydrolysis of ATP in the presence of single-stranded DNA, the ATP-dependent uptake of single-stranded DNA by duplex DNA, and the ATP-dependent hybridization of homologous single-stranded DNAs. It interacts with LexA causing its activation and leading to its autocatalytic cleavage. In Acidothermus cellulolyticus (strain ATCC 43068 / DSM 8971 / 11B), this protein is Protein RecA.